The chain runs to 302 residues: NmrA-like family domain-containing protein DDB_G0286605 (302 aa).

Residues 9–14 (GGTGYQ), 35–39 (RNPES), 56–57 (DE), 78–80 (TNS), K130, and 157–160 (YFQN) contribute to the NADP(+) site.

Belongs to the NmrA-type oxidoreductase family.

Functionally, may be a redox sensor protein. The chain is NmrA-like family domain-containing protein DDB_G0286605 from Dictyostelium discoideum (Social amoeba).